Here is a 333-residue protein sequence, read N- to C-terminus: Fructose-1,6-bisphosphatase class 1 1 (333 aa).

Residues Glu-81, Asp-100, Leu-102, and Asp-103 each contribute to the Mg(2+) site. Residues 103–106 (DGSS) and Asn-191 contribute to the substrate site. Residue Glu-263 participates in Mg(2+) binding.

This sequence belongs to the FBPase class 1 family. As to quaternary structure, homotetramer. Mg(2+) is required as a cofactor.

Its subcellular location is the cytoplasm. The catalysed reaction is beta-D-fructose 1,6-bisphosphate + H2O = beta-D-fructose 6-phosphate + phosphate. It participates in carbohydrate biosynthesis; Calvin cycle. The chain is Fructose-1,6-bisphosphatase class 1 1 from Cereibacter sphaeroides (strain ATCC 17023 / DSM 158 / JCM 6121 / CCUG 31486 / LMG 2827 / NBRC 12203 / NCIMB 8253 / ATH 2.4.1.) (Rhodobacter sphaeroides).